The chain runs to 204 residues: Carbon disulfide hydrolase (204 aa).

Residues Cys-35, His-88, and Cys-91 each contribute to the Zn(2+) site.

The protein belongs to the beta-class carbonic anhydrase family. Forms a hexadecameric catenane homooligomer, through interactions of two interlocked octameric rings. Zn(2+) serves as cofactor.

It catalyses the reaction carbon disulfide + 2 H2O = 2 hydrogen sulfide + CO2 + 2 H(+). It participates in sulfur metabolism; hydrogen sulfide biosynthesis. In terms of biological role, catalyzes the conversion of carbon disulfide into hydrogen sulfide and carbon dioxide, with carbonyl sulfide as an intermediate. Likely plays a key role in sulfur metabolism in S.solfataricus. Does not show carbonic anhydrase activity (hydration of CO(2) to carbonate). This is Carbon disulfide hydrolase from Saccharolobus solfataricus (strain ATCC 35092 / DSM 1617 / JCM 11322 / P2) (Sulfolobus solfataricus).